The chain runs to 266 residues: Large ribosomal subunit protein uL2m (266 aa).

Belongs to the universal ribosomal protein uL2 family.

The protein localises to the mitochondrion. The chain is Large ribosomal subunit protein uL2m (mrpl2) from Dictyostelium citrinum (Slime mold).